The sequence spans 217 residues: Outer-membrane lipoprotein LolB (217 aa).

The N-terminal stretch at 1-20 (MSRAVRTLALGGLVLVGLSA) is a signal peptide. Cysteine 21 carries the N-palmitoyl cysteine lipid modification. Cysteine 21 carries S-diacylglycerol cysteine lipidation.

This sequence belongs to the LolB family. Monomer.

Its subcellular location is the cell outer membrane. In terms of biological role, plays a critical role in the incorporation of lipoproteins in the outer membrane after they are released by the LolA protein. This Xanthomonas euvesicatoria pv. vesicatoria (strain 85-10) (Xanthomonas campestris pv. vesicatoria) protein is Outer-membrane lipoprotein LolB.